Reading from the N-terminus, the 224-residue chain is tRNA pseudouridine synthase B (224 aa).

The active-site Nucleophile is the aspartate 46.

This sequence belongs to the pseudouridine synthase TruB family. Type 1 subfamily.

The catalysed reaction is uridine(55) in tRNA = pseudouridine(55) in tRNA. Functionally, responsible for synthesis of pseudouridine from uracil-55 in the psi GC loop of transfer RNAs. The polypeptide is tRNA pseudouridine synthase B (Methylococcus capsulatus (strain ATCC 33009 / NCIMB 11132 / Bath)).